We begin with the raw amino-acid sequence, 291 residues long: Phytanoyl-CoA dioxygenase domain-containing protein 1 (291 aa).

2-oxoglutarate contacts are provided by residues Lys102, Met141, 156-158, and Trp174; that span reads HQD. Fe cation contacts are provided by His156 and Asp158. Residue His246 participates in Fe cation binding. 2-oxoglutarate-binding residues include Ser248 and Arg257.

The protein belongs to the PhyH family. PHYHD1 subfamily. The cofactor is Fe cation.

Functionally, 2-oxoglutarate(2OG)-dependent dioxygenase that catalyzes the conversion of 2-oxoglutarate to succinate and CO(2) in an iron-dependent manner. However, does not couple 2OG turnover to the hydroxylation of acyl-coenzyme A derivatives, implying that it is not directly involved in phytanoyl coenzyme-A metabolism. Does not show detectable activity towards fatty acid CoA thioesters. This is Phytanoyl-CoA dioxygenase domain-containing protein 1 (phyhd1) from Danio rerio (Zebrafish).